Here is a 420-residue protein sequence, read N- to C-terminus: Dihydrolipoyllysine-residue succinyltransferase component of 2-oxoglutarate dehydrogenase complex (420 aa).

The region spanning 1–76 is the Lipoyl-binding domain; sequence MAEVKVPELA…EVGQAVAVVG (76 aa). Position 42 is an N6-lipoyllysine (Lys-42). The disordered stretch occupies residues 75-199; that stretch reads VGEGQVNTSN…IREKMSRRKK (125 aa). Polar residues predominate over residues 81–90; it reads NTSNDSSNES. Positions 91–102 are enriched in basic and acidic residues; that stretch reads SQKDEAKEKETP. Residues 103 to 127 show a composition bias toward polar residues; sequence KQSNPNSSESENTQDNSQQRINATP. One can recognise a Peripheral subunit-binding (PSBD) domain in the interval 124-160; that stretch reads NATPSARRHARKNGVDLSEVSGKGNDVLRKDDVENSQ. Basic and acidic residues predominate over residues 149–158; it reads DVLRKDDVEN. The span at 159-174 shows a compositional bias: low complexity; that stretch reads SQKSSSQTAKSESKSQ. A compositionally biased stretch (polar residues) spans 175–186; it reads NSGSKQTNNNPS. Catalysis depends on residues His-391 and Asp-395.

Belongs to the 2-oxoacid dehydrogenase family. Forms a 24-polypeptide structural core with octahedral symmetry. Part of the 2-oxoglutarate dehydrogenase (OGDH) complex composed of E1 (2-oxoglutarate dehydrogenase), E2 (dihydrolipoamide succinyltransferase) and E3 (dihydrolipoamide dehydrogenase); the complex contains multiple copies of the three enzymatic components (E1, E2 and E3). It depends on (R)-lipoate as a cofactor.

The catalysed reaction is N(6)-[(R)-dihydrolipoyl]-L-lysyl-[protein] + succinyl-CoA = N(6)-[(R)-S(8)-succinyldihydrolipoyl]-L-lysyl-[protein] + CoA. Its pathway is amino-acid degradation; L-lysine degradation via saccharopine pathway; glutaryl-CoA from L-lysine: step 6/6. In terms of biological role, E2 component of the 2-oxoglutarate dehydrogenase (OGDH) complex which catalyzes the second step in the conversion of 2-oxoglutarate to succinyl-CoA and CO(2). This is Dihydrolipoyllysine-residue succinyltransferase component of 2-oxoglutarate dehydrogenase complex (odhB) from Staphylococcus epidermidis (strain ATCC 35984 / DSM 28319 / BCRC 17069 / CCUG 31568 / BM 3577 / RP62A).